The chain runs to 241 residues: Uridylate kinase (241 aa).

12 to 15 (KLSG) contacts ATP. Glycine 54 serves as a coordination point for UMP. 2 residues coordinate ATP: glycine 55 and arginine 59. UMP contacts are provided by residues aspartate 74 and 135-142 (TGNPFFTT). The ATP site is built by threonine 162, tyrosine 168, and aspartate 171.

It belongs to the UMP kinase family. In terms of assembly, homohexamer.

The protein localises to the cytoplasm. The enzyme catalyses UMP + ATP = UDP + ADP. The protein operates within pyrimidine metabolism; CTP biosynthesis via de novo pathway; UDP from UMP (UMPK route): step 1/1. With respect to regulation, inhibited by UTP. Catalyzes the reversible phosphorylation of UMP to UDP. The sequence is that of Uridylate kinase from Magnetococcus marinus (strain ATCC BAA-1437 / JCM 17883 / MC-1).